The sequence spans 364 residues: MANKTVLFNKHLEANAKMVDFHGWDMPLNYGSQIEEHHVVRQDAGMFDVSHMTVVDVTGAEACDFLRKLLANDVAKLKVPGKALYGGMLDHNAGVIDDLITYYLSDTHYRIVVNSATREKDLAWITEQVKGYDVTVTERPELAMIAVQGPNAKAKAAAVFTDEQNAAVEGMKPFFGVQSGSLFIATTGYTGEAGYEIIVPEAEAEALWQALLDNGVKPCGLGARDTLRLEAGMNLYGQDMDESVNPLAANMGWTIAWEPEDRDFIGREALAAIKAAGTDKLVGLVMEAKGVLRTGMPVFFTDADGVEQQGAITSGTFSPTLGYSIAMARVPNSVGDVAEVEMRKKRVPVKVIAPSFVRNGKQAF.

Belongs to the GcvT family. As to quaternary structure, the glycine cleavage system is composed of four proteins: P, T, L and H.

It carries out the reaction N(6)-[(R)-S(8)-aminomethyldihydrolipoyl]-L-lysyl-[protein] + (6S)-5,6,7,8-tetrahydrofolate = N(6)-[(R)-dihydrolipoyl]-L-lysyl-[protein] + (6R)-5,10-methylene-5,6,7,8-tetrahydrofolate + NH4(+). Functionally, the glycine cleavage system catalyzes the degradation of glycine. The polypeptide is Aminomethyltransferase (Shewanella loihica (strain ATCC BAA-1088 / PV-4)).